A 367-amino-acid chain; its full sequence is 3-dehydroquinate synthase (367 aa).

NAD(+)-binding positions include 69–74, 103–107, 127–128, Lys140, Lys149, and 167–170; these read DGESHK, GVIGD, TT, and TLAT. Residues Glu182, His245, and His262 each contribute to the Zn(2+) site.

This sequence belongs to the sugar phosphate cyclases superfamily. Dehydroquinate synthase family. The cofactor is Co(2+). It depends on Zn(2+) as a cofactor. NAD(+) serves as cofactor.

The protein localises to the cytoplasm. It carries out the reaction 7-phospho-2-dehydro-3-deoxy-D-arabino-heptonate = 3-dehydroquinate + phosphate. The protein operates within metabolic intermediate biosynthesis; chorismate biosynthesis; chorismate from D-erythrose 4-phosphate and phosphoenolpyruvate: step 2/7. Its function is as follows. Catalyzes the conversion of 3-deoxy-D-arabino-heptulosonate 7-phosphate (DAHP) to dehydroquinate (DHQ). This Stutzerimonas stutzeri (strain A1501) (Pseudomonas stutzeri) protein is 3-dehydroquinate synthase.